Reading from the N-terminus, the 258-residue chain is Global transcriptional regulator CodY (258 aa).

The GAF domain stretch occupies residues 1–156; it reads MSSLLDKTRM…SATIIGLEIL (156 aa). The H-T-H motif DNA-binding region spans 204–223; it reads ASKIADKVGITRSVIVNALR.

The protein belongs to the CodY family.

Its subcellular location is the cytoplasm. Functionally, DNA-binding global transcriptional regulator which is involved in the adaptive response to starvation and acts by directly or indirectly controlling the expression of numerous genes in response to nutrient availability. During rapid exponential growth, CodY is highly active and represses genes whose products allow adaptation to nutrient depletion. The sequence is that of Global transcriptional regulator CodY from Clostridium botulinum (strain Okra / Type B1).